Here is a 144-residue protein sequence, read N- to C-terminus: MLSPRKTKFRKHHRGRMKGISTRGNSIVFGKFALQALEPSWITSRQIEAGRRSMTRYARRGGKIWIRIFPDKPVTMRPAETRMGSGKGSPEYWVAVVKPGRILYEMDGVPENIARAAMKIAAYKMPNKTQFLIRDNKDLIDSKI.

This sequence belongs to the universal ribosomal protein uL16 family. Part of the 50S ribosomal subunit.

It localises to the plastid. Its subcellular location is the chloroplast. The sequence is that of Large ribosomal subunit protein uL16c from Chara vulgaris (Common stonewort).